The following is a 68-amino-acid chain: MKRQKRDHTSRAFTRGYQAGVEGRSRSLCPHSTGEIKQSWLTGWREGREDHWNGFNTLAQVQRISNIS.

This sequence belongs to the ribosome modulation factor family.

It localises to the cytoplasm. Functionally, during stationary phase, converts 70S ribosomes to an inactive dimeric form (100S ribosomes). The protein is Ribosome modulation factor of Saccharophagus degradans (strain 2-40 / ATCC 43961 / DSM 17024).